The primary structure comprises 224 residues: Ribonuclease 3 (224 aa).

Residues 4–127 (IEKLEQSLTY…IIGAIHLEAG (124 aa)) form the RNase III domain. Residue E40 coordinates Mg(2+). D44 is a catalytic residue. 2 residues coordinate Mg(2+): D113 and E116. E116 is an active-site residue. The 70-residue stretch at 154–223 (DYKTKLQEIT…AKIALEKLGA (70 aa)) folds into the DRBM domain.

It belongs to the ribonuclease III family. Homodimer. Mg(2+) serves as cofactor.

It localises to the cytoplasm. The enzyme catalyses Endonucleolytic cleavage to 5'-phosphomonoester.. Functionally, digests double-stranded RNA. Involved in the processing of primary rRNA transcript to yield the immediate precursors to the large and small rRNAs (23S and 16S). Processes some mRNAs, and tRNAs when they are encoded in the rRNA operon. Processes pre-crRNA and tracrRNA of type II CRISPR loci if present in the organism. The sequence is that of Ribonuclease 3 from Campylobacter jejuni subsp. jejuni serotype O:6 (strain 81116 / NCTC 11828).